Reading from the N-terminus, the 329-residue chain is 4-methyl-2-oxopentanoate reductase A (329 aa).

NAD(+) is bound by residues 162 to 163 (GI), 240 to 242 (TAR), and D266. R242 is an active-site residue. Residue E271 is part of the active site. Catalysis depends on H289, which acts as the Proton donor.

Belongs to the D-isomer specific 2-hydroxyacid dehydrogenase family.

It carries out the reaction (2R)-hydroxy-4-methylpentanoate + NADP(+) = 4-methyl-2-oxopentanoate + NADPH + H(+). It catalyses the reaction a (2R)-2-hydroxycarboxylate + NADP(+) = a 2-oxocarboxylate + NADPH + H(+). Its function is as follows. 4-methyl-2-oxopentanoate (MOA) reductase that reduces MOA, a possible intermediate in leucine synthesis, to D-leucate in a NADPH- or NADH-dependent manner, but with a preference for NADPH. In addition to MOA, shows broad substrate specificity toward 2-keto acids. The polypeptide is 4-methyl-2-oxopentanoate reductase A (Aspergillus oryzae (strain ATCC 42149 / RIB 40) (Yellow koji mold)).